The chain runs to 363 residues: Protein RecA (363 aa).

Position 66 to 73 (66 to 73 (GPESSGKT)) interacts with ATP. A disordered region spans residues 327–363 (YGIDEKSIADRENPEKIKEKREETSEENKTDNSEKTK). A compositionally biased stretch (basic and acidic residues) spans 329-363 (IDEKSIADRENPEKIKEKREETSEENKTDNSEKTK).

It belongs to the RecA family.

It is found in the cytoplasm. Functionally, can catalyze the hydrolysis of ATP in the presence of single-stranded DNA, the ATP-dependent uptake of single-stranded DNA by duplex DNA, and the ATP-dependent hybridization of homologous single-stranded DNAs. It interacts with LexA causing its activation and leading to its autocatalytic cleavage. In Lactobacillus acidophilus (strain ATCC 700396 / NCK56 / N2 / NCFM), this protein is Protein RecA.